Reading from the N-terminus, the 326-residue chain is Regulation of nuclear pre-mRNA domain-containing protein 1B (326 aa).

S2 carries the post-translational modification N-acetylserine. One can recognise a CID domain in the interval 2-133 (SSFSESALEK…QLKLSMEDSK (132 aa)). A compositionally biased stretch (basic and acidic residues) spans 128-144 (SMEDSKSPPPKAAEEKK). Residues 128 to 148 (SMEDSKSPPPKAAEEKKSLKR) are disordered. Phosphoserine occurs at positions 132 and 134. Position 161 is a phosphotyrosine (Y161). Phosphoserine is present on residues S166 and S299.

The protein belongs to the UPF0400 (RTT103) family. In terms of assembly, homodimer. May form a heterodimer with RPRD1A. Associates with RPAP2. Associates with the RNA polymerase II complex. Widely expressed in the adult with highest levels in liver, colon, prostate and uterus and lowest levels in heart and kidney. Not detected in rectum.

It localises to the nucleus. Its function is as follows. Interacts with phosphorylated C-terminal heptapeptide repeat domain (CTD) of the largest RNA polymerase II subunit POLR2A, and participates in dephosphorylation of the CTD by RPAP2. Transcriptional regulator which enhances expression of CCND1. Promotes binding of RNA polymerase II to the CCDN1 promoter and to the termination region before the poly-A site but decreases its binding after the poly-A site. Prevents RNA polymerase II from reading through the 3' end termination site and may allow it to be recruited back to the promoter through promotion of the formation of a chromatin loop. Also enhances the transcription of a number of other cell cycle-related genes including CDK2, CDK4, CDK6 and cyclin-E but not CDKN1A, CDKN1B or cyclin-A. Promotes cell proliferation. The chain is Regulation of nuclear pre-mRNA domain-containing protein 1B (Rprd1b) from Mus musculus (Mouse).